The primary structure comprises 679 residues: Methionine--tRNA ligase (679 aa).

The short motif at 14-24 is the 'HIGH' region element; sequence PYANGSIHLGH. Residues Cys145, Cys148, Cys158, and Cys161 each coordinate Zn(2+). Positions 331-335 match the 'KMSKS' region motif; it reads KMSKS. Lys334 provides a ligand contact to ATP. One can recognise a tRNA-binding domain in the interval 577 to 679; that stretch reads TFAAVDLRIA…NGAKPGQRVM (103 aa).

The protein belongs to the class-I aminoacyl-tRNA synthetase family. MetG type 1 subfamily. Homodimer. Zn(2+) is required as a cofactor.

The protein localises to the cytoplasm. It catalyses the reaction tRNA(Met) + L-methionine + ATP = L-methionyl-tRNA(Met) + AMP + diphosphate. Its function is as follows. Is required not only for elongation of protein synthesis but also for the initiation of all mRNA translation through initiator tRNA(fMet) aminoacylation. The polypeptide is Methionine--tRNA ligase (Stutzerimonas stutzeri (strain A1501) (Pseudomonas stutzeri)).